A 258-amino-acid chain; its full sequence is Shikimate dehydrogenase (NADP(+)) (258 aa).

Shikimate is bound by residues 14 to 16 and Thr61; that span reads SES. Catalysis depends on Lys65, which acts as the Proton acceptor. Shikimate-binding residues include Asn86 and Asp101. Residues 125–129 and Leu211 contribute to the NADP(+) site; that span reads GSGGS. Tyr213 is a binding site for shikimate. NADP(+) is bound at residue Gly234.

The protein belongs to the shikimate dehydrogenase family. In terms of assembly, homodimer.

The enzyme catalyses shikimate + NADP(+) = 3-dehydroshikimate + NADPH + H(+). Its pathway is metabolic intermediate biosynthesis; chorismate biosynthesis; chorismate from D-erythrose 4-phosphate and phosphoenolpyruvate: step 4/7. Functionally, involved in the biosynthesis of the chorismate, which leads to the biosynthesis of aromatic amino acids. Catalyzes the reversible NADPH linked reduction of 3-dehydroshikimate (DHSA) to yield shikimate (SA). This Clostridium botulinum (strain Loch Maree / Type A3) protein is Shikimate dehydrogenase (NADP(+)).